A 563-amino-acid polypeptide reads, in one-letter code: Src substrate protein p85 (563 aa).

6 Cortactin repeats span residues 89-125 (ASHG…SQVD), 126-162 (SVKG…SQKD), 163-199 (YSSG…SQKD), 200-236 (YSKG…SQKD), 237-273 (YVKG…SQKD), and 274-310 (YKSG…SQQD). One copy of the Cortactin 7; truncated repeat lies at 311–333 (YSKGFGGKYGVQKDRMDKNAATF). The tract at residues 331-477 (ATFEDIEKPT…EAVSQREAEY (147 aa)) is disordered. Residues 349 to 410 (VERVANKTSS…EEQAKAKKQT (62 aa)) adopt a coiled-coil conformation. Basic and acidic residues predominate over residues 366 to 405 (LAKEKEQEDRRKAEAERAQRMAREKQEQEEARRKLEEQAK). The region spanning 505 to 563 (ELGITAIALYDYQAAGDDEISFDPDDIITNIEMIDDGWWRGVCKGRYGLFPANYVELRQ) is the SH3 domain.

In terms of processing, acetylated. Post-translationally, in normal cells, appears to be phosphorylated on serine and threonine; in cells expressing activated forms of pp60-src, they become heavily phosphorylated on tyrosine in vitro. Tyrosine phosphorylation in transformed cells may contribute to cellular growth regulation and transformation.

The protein resides in the cytoplasm. It is found in the cytoskeleton. It localises to the cell projection. The protein localises to the lamellipodium. Its subcellular location is the ruffle. The protein resides in the dendrite. It is found in the cell membrane. It localises to the podosome. The protein localises to the cell junction. Its subcellular location is the focal adhesion. The protein resides in the membrane. It is found in the clathrin-coated pit. It localises to the dendritic spine. The protein localises to the cell cortex. Its subcellular location is the endoplasmic reticulum. Its function is as follows. Contributes to the organization of the actin cytoskeleton and cell shape. Plays a role in the formation of lamellipodia and in cell migration. Plays a role in the regulation of neuron morphology, axon growth and formation of neuronal growth cones, and may play a role in the regulation of neuronal spine density. Plays a role in focal adhesion assembly and turnover. Plays a role in intracellular protein transport and endocytosis, and in modulating the levels of potassium channels present at the cell membrane. Plays a role in endocytosis via clathrin-coated pits. The protein is Src substrate protein p85 (CTTN1) of Gallus gallus (Chicken).